The primary structure comprises 261 residues: 6-phosphogluconolactonase (261 aa).

The protein belongs to the glucosamine/galactosamine-6-phosphate isomerase family. 6-phosphogluconolactonase subfamily.

It catalyses the reaction 6-phospho-D-glucono-1,5-lactone + H2O = 6-phospho-D-gluconate + H(+). Its pathway is carbohydrate degradation; pentose phosphate pathway; D-ribulose 5-phosphate from D-glucose 6-phosphate (oxidative stage): step 2/3. In terms of biological role, hydrolysis of 6-phosphogluconolactone to 6-phosphogluconate. This chain is 6-phosphogluconolactonase (pgl), found in Streptomyces coelicolor (strain ATCC BAA-471 / A3(2) / M145).